A 134-amino-acid chain; its full sequence is Profilin-4 (134 aa).

Cys-13 and Cys-118 are joined by a disulfide. An Involved in PIP2 interaction motif is present at residues Ala-84–Thr-100. At Thr-114 the chain carries Phosphothreonine.

It belongs to the profilin family. In terms of assembly, occurs in many kinds of cells as a complex with monomeric actin in a 1:1 ratio. In terms of processing, phosphorylated by MAP kinases.

The protein localises to the cytoplasm. The protein resides in the cytoskeleton. Binds to actin and affects the structure of the cytoskeleton. At high concentrations, profilin prevents the polymerization of actin, whereas it enhances it at low concentrations. This chain is Profilin-4, found in Olea europaea (Common olive).